We begin with the raw amino-acid sequence, 527 residues long: NAD(P)H-quinone oxidoreductase chain 4 1 (527 aa).

The next 14 helical transmembrane spans lie at 5-25, 35-55, 90-110, 112-132, 136-156, 168-188, 211-231, 242-262, 274-294, 310-330, 331-351, 386-406, 416-436, and 463-483; these read FPWL…LPII, WYSL…FCTG, LIIL…PVSF, PKLF…VFAV, LLFF…LSIW, FILY…TMAF, LLLY…FPLH, TAPA…YALL, AVFA…AALT, ISHM…GLSG, AVLQ…LVGA, LALP…GFAT, VLVI…LLSM, and VFII…PKIV.

It belongs to the complex I subunit 4 family.

It localises to the cellular thylakoid membrane. The enzyme catalyses a plastoquinone + NADH + (n+1) H(+)(in) = a plastoquinol + NAD(+) + n H(+)(out). It carries out the reaction a plastoquinone + NADPH + (n+1) H(+)(in) = a plastoquinol + NADP(+) + n H(+)(out). Its function is as follows. NDH-1 shuttles electrons from NAD(P)H, via FMN and iron-sulfur (Fe-S) centers, to quinones in the respiratory chain. The immediate electron acceptor for the enzyme in this species is believed to be plastoquinone. Couples the redox reaction to proton translocation (for every two electrons transferred, four hydrogen ions are translocated across the cytoplasmic membrane), and thus conserves the redox energy in a proton gradient. This is NAD(P)H-quinone oxidoreductase chain 4 1 from Trichodesmium erythraeum (strain IMS101).